The sequence spans 186 residues: Biofilm operon icaADBC HTH-type negative transcriptional regulator IcaR (186 aa).

The region spanning 1–59 is the HTH tetR-type domain; it reads MKDKIIDNAITLFSEKGYDGTTLDDIAKSVNIKKASLYYHFDSKKSIYEQSVKCCFDYL. The H-T-H motif DNA-binding region spans 22 to 41; that stretch reads TLDDIAKSVNIKKASLYYHF.

Homodimer.

Represses transcription of the icaADBC operon necessary for biofilm production. This Staphylococcus aureus (strain NCTC 8325 / PS 47) protein is Biofilm operon icaADBC HTH-type negative transcriptional regulator IcaR (icaR).